Here is a 926-residue protein sequence, read N- to C-terminus: Probable zinc protease PqqL (926 aa).

Histidine 79 provides a ligand contact to Zn(2+). The active-site Proton acceptor is glutamate 82. 2 residues coordinate Zn(2+): histidine 83 and glutamate 159.

It belongs to the peptidase M16 family. Zn(2+) is required as a cofactor.

The chain is Probable zinc protease PqqL (pqqL) from Haemophilus influenzae (strain ATCC 51907 / DSM 11121 / KW20 / Rd).